The primary structure comprises 493 residues: F(420)H(2) dehydrogenase subunit N (493 aa).

Helical transmembrane passes span 7–27 (LAPELVLVATGLVILLTGVFL), 34–54 (ILGYLATLGTLAAIFLTVKSF), 78–98 (LSQFFKLVFLAVALIVSIASI), 107–127 (TEEFYTLVLFATFGMMIVASA), 130–150 (LILLFCAFELASLATFALAGF), 165–185 (FVIGSVSAALMLFGLSFVYGA), 205–225 (PIGIVAIVLLTAGFGFKMALV), 244–264 (ALLAAGSKKMGFVAAFRVFII), 273–293 (WQFMFTLLAVVTMTFGNVVAV), 310–330 (AGYIAMAFAVMTPVALAGGIM), 333–353 (LAHAFMKAGAFIAAAAVVWMI), 381–401 (ALCMTVFVFALAGIPPTAGFM), 404–424 (FVLFSSTIQAGMTWLAVIAIL), and 454–474 (IPFPYAAALLVAVAGVLVMGL).

It belongs to the complex I subunit 2 family. In terms of assembly, the FPO complex is composed of at least 13 different subunits. FpoA, FpoH, FpoJ, FpoK, FpoL, FpoM and FpoN proteins constitute the membrane sector of the complex.

The protein resides in the cell membrane. It carries out the reaction methanophenazine + reduced coenzyme F420-(gamma-L-Glu)(n) = dihydromethanophenazine + oxidized coenzyme F420-(gamma-L-Glu)(n) + H(+). Functionally, component of the F(420)H(2) dehydrogenase (FPO complex) which is part of the energy-conserving F(420)H(2):heterodisulfide oxidoreductase system. The membrane-bound electron transfer system of the complex plays an important role in the metabolism of methylotrophic methanogens when the organisms grow on methanol or methylamines. Catalyzes the oxidation of methanophenazine to dihydromethanophenazine. It shuttles electrons from F(420)H(2), via FAD and iron-sulfur (Fe-S) centers, to methanophenazine (an electron carrier in the membrane). It couples the redox reaction to proton translocation (for every two electrons transferred, two hydrogen ions are translocated across the cytoplasmic membrane), and thus conserves the redox energy in a proton gradient. It also catalyzes the oxidation of F(420)H(2) with quinones such as 2,3-dimethyl-1,4-naphthoquinone, 2-methyl-1,4-naphthoquinone and tetramethyl-p-benzoquinone. The protein is F(420)H(2) dehydrogenase subunit N (fpoN) of Methanosarcina mazei (strain ATCC BAA-159 / DSM 3647 / Goe1 / Go1 / JCM 11833 / OCM 88) (Methanosarcina frisia).